The primary structure comprises 154 residues: Glycosylation-dependent cell adhesion molecule 1 (154 aa).

A signal peptide spans 1 to 18 (MKFLCILLLASLAATSLA). Thr34 is a glycosylation site (O-linked (GalNAc...) threonine; partial). 5 positions are modified to phosphoserine: Ser48, Ser53, Ser57, Ser59, and Ser65. Over residues 51–65 (DLSKEPSISREDLIS) the composition is skewed to basic and acidic residues. Positions 51–115 (DLSKEPSISR…EHAPSDASTT (65 aa)) are disordered. N-linked (GlcNAc...) asparagine glycosylation occurs at Asn96.

The protein belongs to the PP3/GlyCAM-1 family. Highly and specifically expressed in the lactating mammary gland.

It is found in the membrane. This chain is Glycosylation-dependent cell adhesion molecule 1 (GLYCAM1), found in Capra hircus (Goat).